A 1016-amino-acid polypeptide reads, in one-letter code: EMILIN-1 (1016 aa).

A signal peptide spans 1–21 (MAPRTLWSCYLCCLLTAAAGA). The EMI domain occupies 56–131 (HRNWCAYVVT…QGYGGDDCAE (76 aa)). 3 disulfides stabilise this stretch: cysteine 60–cysteine 121, cysteine 85–cysteine 92, and cysteine 120–cysteine 129. Residues 135-182 (PALGPASSTPRPLARPARPNLSGSSAGSPLSGLGGEGPGESEKVQQLE) form a disordered region. Residues 139–165 (PASSTPRPLARPARPNLSGSSAGSPLS) show a composition bias toward low complexity. The N-linked (GlcNAc...) asparagine glycan is linked to asparagine 154. Positions 216–256 (TAFNGRQQPADAAARPGVHETLNEIQHQLQLLDTRVSTHDQ) form a coiled coil. Disordered regions lie at residues 257–288 (ELGH…GPSE) and 383–402 (RGTE…GYTS). Positions 266 to 279 (GGSSSSGGSRAPAP) are enriched in low complexity. The stretch at 356-420 (PELGRRLAEL…EDRFNSTLGP (65 aa)) forms a coiled coil. Residues 386-397 (ELGGAAGQGGHP) show a composition bias toward gly residues. Asparagine 415 is a glycosylation site (N-linked (GlcNAc...) asparagine). The disordered stretch occupies residues 416 to 435 (STLGPSEEQEESWPGAPGGL). N-linked (GlcNAc...) asparagine glycosylation is found at asparagine 455 and asparagine 561. Residues 576 to 603 (AHGDEGCGACGGVQEELGRLRDGVERCS) adopt a coiled-coil conformation. Asparagine 658 carries an N-linked (GlcNAc...) asparagine glycan. Residues 685-752 (IISEINRLQQ…GLQGLREGLS (68 aa)) are a coiled coil. Residues asparagine 766 and asparagine 794 are each glycosylated (N-linked (GlcNAc...) asparagine). 2 disordered regions span residues 811 to 863 (DLTG…VEGA) and 942 to 961 (RVDS…VAES). The Collagen-like domain occupies 814 to 864 (GPAGEAGPPGPPGLQGPPGPAGPPGSPGKDGQEGPIGPPGPQGEQGVEGAP). The span at 821–839 (PPGPPGLQGPPGPAGPPGS) shows a compositional bias: pro residues. The stretch at 835–857 (GPPGSPGKDGQEGPIGPPGPQGE) forms a coiled coil. In terms of domain architecture, C1q spans 866-1013 (APVPQVAFSA…GALLYGDPEL (148 aa)).

In terms of assembly, homotrimer associated through a moderately stable interaction of the C-terminal globular C1q domains, allowing the nucleation of the triple helix and then a further quaternary assembly to higher-order polymers via intermolecular disulfide bonds. Interacts with EMILIN2. Interacts with EFEMP2; this interaction promotes the incorporation of EFEMP2 into the extracellular matrix. In terms of tissue distribution, distributed in tissues where resilience and elastic recoil are prominent. Highest levels in the adult small intestine, aorta, lung, uterus, and appendix and in the fetal spleen, kidney, lung, and heart; intermediate expression was detected in adult liver, ovary, colon, stomach, lymph node and spleen; adult heart, bladder, prostate, adrenal gland, mammary gland, placenta and kidney showed low expression whereas a series of other adult tissues, including skeletal muscle and different regions of adult brain show no expression. Detected in intramuscular nerve bundles, where it particularly localizes in the epineurium, the most external layer of dense connective tissue enclosing the nerve.

The protein localises to the secreted. Its subcellular location is the extracellular space. It is found in the extracellular matrix. Functionally, involved in elastic and collagen fibers formation. It is required for EFEMP2 deposition into the extracellular matrix, and collagen network assembly and cross-linking via protein-lysine 6-oxidase/LOX activity. May be responsible for anchoring smooth muscle cells to elastic fibers, and may be involved in the processes that regulate vessel assembly. Has cell adhesive capacity. This is EMILIN-1 (EMILIN1) from Homo sapiens (Human).